We begin with the raw amino-acid sequence, 122 residues long: MIQQQTTLKVADNSGARGIMCIKVLGGSNRRYANIGDIIVASVKSATPGGVVKKGEVVKAVVVRSKKGVRRADGSYIKFDENAAVIIKDDKQPKGTRIFGPVARELRDKEFNKILSLAPEVL.

Belongs to the universal ribosomal protein uL14 family. In terms of assembly, part of the 50S ribosomal subunit. Forms a cluster with proteins L3 and L19. In the 70S ribosome, L14 and L19 interact and together make contacts with the 16S rRNA in bridges B5 and B8.

Its function is as follows. Binds to 23S rRNA. Forms part of two intersubunit bridges in the 70S ribosome. In Clostridium tetani (strain Massachusetts / E88), this protein is Large ribosomal subunit protein uL14.